Reading from the N-terminus, the 475-residue chain is 3-isopropylmalate dehydratase large subunit 1 (475 aa).

3 residues coordinate [4Fe-4S] cluster: cysteine 353, cysteine 413, and cysteine 416.

This sequence belongs to the aconitase/IPM isomerase family. LeuC type 1 subfamily. Heterodimer of LeuC and LeuD. Requires [4Fe-4S] cluster as cofactor.

It carries out the reaction (2R,3S)-3-isopropylmalate = (2S)-2-isopropylmalate. It functions in the pathway amino-acid biosynthesis; L-leucine biosynthesis; L-leucine from 3-methyl-2-oxobutanoate: step 2/4. In terms of biological role, catalyzes the isomerization between 2-isopropylmalate and 3-isopropylmalate, via the formation of 2-isopropylmaleate. This chain is 3-isopropylmalate dehydratase large subunit 1, found in Mannheimia succiniciproducens (strain KCTC 0769BP / MBEL55E).